The chain runs to 261 residues: Membrane protein insertase MisCA (261 aa).

The N-terminal stretch at 1 to 22 is a signal peptide; sequence MLLKRRIGLLLSMVGVFMLLAG. A lipid anchor (N-palmitoyl cysteine) is attached at C23. Residue C23 is the site of S-diacylglycerol cysteine attachment. Transmembrane regions (helical) follow at residues 61–81, 131–151, 174–194, 204–224, and 225–245; these read YGLS…PLMI, LAGC…YHAI, YILP…MMAG, MMLW…PAAL, and SLYW…IKGP.

The protein belongs to the OXA1/ALB3/YidC family. Type 2 subfamily. In terms of assembly, mostly monomeric, it may also form dimers. Interacts with SpoIIIAE. Forms a complex with the F(1)F(0) ATP synthase in which can be found the alpha, beta, gamma, delta and epsilon subunits of F(1) and a, b and subunits of F(0). YqgA is found in the same complex.

It localises to the cell membrane. Its function is as follows. Required for the insertion and/or proper folding and/or complex formation of integral membrane proteins into the membrane. Involved in integration of membrane proteins that insert both dependently and independently of the Sec translocase complex, as well as at least some lipoproteins. Also involved in protein secretion processes. Essential for sporulation by activating sigma factor SpoIIIG/SigG after engulfment is completed in the prespore, maybe by acting on SpoIIIAE. It has an overlapping, although partly distinct, function compared to YqjG(MisCB). In Bacillus subtilis (strain 168), this protein is Membrane protein insertase MisCA (misCA).